Reading from the N-terminus, the 271-residue chain is Hydroxyethylthiazole kinase (271 aa).

Substrate is bound at residue Met-45. Positions 121 and 168 each coordinate ATP. Residue Gly-195 participates in substrate binding.

This sequence belongs to the Thz kinase family. Mg(2+) serves as cofactor.

It catalyses the reaction 5-(2-hydroxyethyl)-4-methylthiazole + ATP = 4-methyl-5-(2-phosphooxyethyl)-thiazole + ADP + H(+). It participates in cofactor biosynthesis; thiamine diphosphate biosynthesis; 4-methyl-5-(2-phosphoethyl)-thiazole from 5-(2-hydroxyethyl)-4-methylthiazole: step 1/1. Catalyzes the phosphorylation of the hydroxyl group of 4-methyl-5-beta-hydroxyethylthiazole (THZ). This chain is Hydroxyethylthiazole kinase, found in Bacillus pumilus (strain SAFR-032).